A 378-amino-acid chain; its full sequence is Bifunctional enzyme IspD/IspF (378 aa).

Residues methionine 1–arginine 222 are 2-C-methyl-D-erythritol 4-phosphate cytidylyltransferase. The interval arginine 222–glycine 378 is 2-C-methyl-D-erythritol 2,4-cyclodiphosphate synthase. Positions 228 and 230 each coordinate a divalent metal cation. 4-CDP-2-C-methyl-D-erythritol 2-phosphate-binding positions include aspartate 228–histidine 230 and histidine 254–serine 255. Histidine 262 provides a ligand contact to a divalent metal cation. 4-CDP-2-C-methyl-D-erythritol 2-phosphate is bound by residues aspartate 276–glycine 278, threonine 352–glutamate 355, phenylalanine 359, and arginine 362.

It in the N-terminal section; belongs to the IspD/TarI cytidylyltransferase family. IspD subfamily. This sequence in the C-terminal section; belongs to the IspF family. It depends on a divalent metal cation as a cofactor.

The catalysed reaction is 2-C-methyl-D-erythritol 4-phosphate + CTP + H(+) = 4-CDP-2-C-methyl-D-erythritol + diphosphate. The enzyme catalyses 4-CDP-2-C-methyl-D-erythritol 2-phosphate = 2-C-methyl-D-erythritol 2,4-cyclic diphosphate + CMP. It functions in the pathway isoprenoid biosynthesis; isopentenyl diphosphate biosynthesis via DXP pathway; isopentenyl diphosphate from 1-deoxy-D-xylulose 5-phosphate: step 2/6. Its pathway is isoprenoid biosynthesis; isopentenyl diphosphate biosynthesis via DXP pathway; isopentenyl diphosphate from 1-deoxy-D-xylulose 5-phosphate: step 4/6. Its function is as follows. Bifunctional enzyme that catalyzes the formation of 4-diphosphocytidyl-2-C-methyl-D-erythritol from CTP and 2-C-methyl-D-erythritol 4-phosphate (MEP) (IspD), and catalyzes the conversion of 4-diphosphocytidyl-2-C-methyl-D-erythritol 2-phosphate (CDP-ME2P) to 2-C-methyl-D-erythritol 2,4-cyclodiphosphate (ME-CPP) with a corresponding release of cytidine 5-monophosphate (CMP) (IspF). The sequence is that of Bifunctional enzyme IspD/IspF from Hyphomonas neptunium (strain ATCC 15444).